Consider the following 363-residue polypeptide: Protein-glutamate methylesterase/protein-glutamine glutaminase 1 (363 aa).

Positions 7–124 (KVLIVDDSAL…SRGMQEYARE (118 aa)) constitute a Response regulatory domain. At Asp-58 the chain carries 4-aspartylphosphate. The CheB-type methylesterase domain maps to 164-356 (FSSTEKIIVI…RRLFGWLESQ (193 aa)). Residues Ser-176, His-202, and Asp-298 contribute to the active site.

Belongs to the CheB family. Phosphorylated by CheA. Phosphorylation of the N-terminal regulatory domain activates the methylesterase activity.

It is found in the cytoplasm. It carries out the reaction [protein]-L-glutamate 5-O-methyl ester + H2O = L-glutamyl-[protein] + methanol + H(+). The catalysed reaction is L-glutaminyl-[protein] + H2O = L-glutamyl-[protein] + NH4(+). Involved in chemotaxis. Part of a chemotaxis signal transduction system that modulates chemotaxis in response to various stimuli. Catalyzes the demethylation of specific methylglutamate residues introduced into the chemoreceptors (methyl-accepting chemotaxis proteins or MCP) by CheR. Also mediates the irreversible deamidation of specific glutamine residues to glutamic acid. This chain is Protein-glutamate methylesterase/protein-glutamine glutaminase 1, found in Geobacter metallireducens (strain ATCC 53774 / DSM 7210 / GS-15).